The chain runs to 1700 residues: Rho guanine nucleotide exchange factor 28 (1700 aa).

Positions 288-343 (TEKATMPSGAAETEEEVRNLESGRSPSEEEEDAKSIKSQVDGPSEHEDQDRLPLDR) are disordered. Residues Ser-312 and Ser-314 each carry the phosphoserine modification. Over residues 330 to 343 (PSEHEDQDRLPLDR) the composition is skewed to basic and acidic residues. At Ser-478 the chain carries Phosphoserine. The interval 483 to 532 (VADSEGEGGSEPPICYAVGSQSSPRTGLPSGDELDSFETNTEPDCNISRT) is disordered. Ser-623 carries the post-translational modification Phosphoserine. Residues 651–698 (RHQFVPGTFSGVLQCSGCDKTLLGKESLQCANCKANTHKGCKDAVPPC) form a Phorbol-ester/DAG-type zinc finger. The DH domain occupies 846–1041 (KRQDVIFELM…KDMIAAVDLK (196 aa)). Residues 1095 to 1184 (ATGRFKDILA…NWMRRIQQAV (90 aa)) enclose the PH domain. Disordered regions lie at residues 1184–1205 (VESC…RRKA) and 1289–1328 (KMGD…TEGT). The span at 1191–1205 (EGGRTSESDEERRKA) shows a compositional bias: basic and acidic residues. The tract at residues 1292–1301 (DVSQSSEESP) is interaction with PTK2/FAK1; required for regulation of axonal branching and synapse formation. Residues 1309–1325 (TPSTQDVPASPTASLVT) show a composition bias toward polar residues. The tract at residues 1369–1380 (IIQAIQNLTRLL) is mediates cytoplasmic retention and interaction with YWHAH. Positions 1421-1522 (QEKSRYLEKQ…RERQKMRVQQ (102 aa)) form a coiled coil. Positions 1421 to 1700 (QEKSRYLEKQ…DGAEENILYL (280 aa)) are interaction with microtubules. Positions 1493-1524 (QLQEYQQSLERLREGQRMVERERQKMRVQQGL) are RNA-binding. Ser-1535 bears the Phosphoserine mark. Positions 1563-1576 (FINEAFGHMSLNTS) are mediates cytoplasmic retention and interaction with MAPK8IP1. Residues 1602 to 1700 (SESPTELKID…DGAEENILYL (99 aa)) are disordered. Position 1604 is a phosphoserine (Ser-1604). Residues 1647–1663 (DLDSFQSESSSPQDSNQ) are compositionally biased toward low complexity. Polar residues predominate over residues 1664-1675 (RGPQPQTLTTEA).

As to quaternary structure, homooligomer; forms some cytoplasmic aggregates. Forms a complex with MAPK8 and MAPK8IP1. Interacts with RHOA. Interacts with microtubules. Interacts with YWHAE and YWHAH. Interacts with PTK2/FAK1. Interacts with NEFL. Interacts with CTNND2; prevents interaction with RHOA. Phosphorylated on tyrosine upon stimulation of cells by laminin. In terms of tissue distribution, highly enriched in the brain (at protein level). Also detected in lung and kidney.

Its subcellular location is the cytoplasm. The protein resides in the cell membrane. Its function is as follows. Functions as a RHOA-specific guanine nucleotide exchange factor regulating signaling pathways downstream of integrins and growth factor receptors. Functions in axonal branching, synapse formation and dendritic morphogenesis. Also functions in focal adhesion formation, cell motility and B-lymphocytes activation. May regulate NEFL expression and aggregation and play a role in apoptosis. The protein is Rho guanine nucleotide exchange factor 28 (Arhgef28) of Mus musculus (Mouse).